Consider the following 510-residue polypeptide: Zinc finger and SCAN domain-containing protein 18 (510 aa).

Residues 1–40 form a disordered region; it reads MLPLEKAFASPRSSPAPPDLPTPGSAAGVQQEEPETIPER. One can recognise an SCAN box domain in the interval 49 to 131; sequence RLRFREFVYQ…SLVEGLADVL (83 aa). Disordered stretches follow at residues 172–191, 201–231, 263–413, and 461–510; these read ALGA…SPDP, EAKT…EWGH, TEEL…GKPY, and KTHE…EAQR. Composition is skewed to basic and acidic residues over residues 214-231 and 263-273; these read QKLK…EWGH and TEELRLVERDP. A compositionally biased stretch (low complexity) spans 288–299; sequence AGCACEEAAPAG. Residues 344 to 356 are compositionally biased toward polar residues; sequence DSATGSQRQSVIQ. C2H2-type zinc fingers lie at residues 413-435 and 441-463; these read YACG…HSSH and YACQ…QKTH. Residues 491-501 are compositionally biased toward low complexity; that stretch reads GGPPESVEGEA.

This sequence belongs to the krueppel C2H2-type zinc-finger protein family.

Its subcellular location is the nucleus. In terms of biological role, may be involved in transcriptional regulation. The protein is Zinc finger and SCAN domain-containing protein 18 (ZSCAN18) of Homo sapiens (Human).